The sequence spans 137 residues: Acidic phospholipase A2 PL-II (137 aa).

The first 17 residues, 1 to 17 (AVCVSLLGASSIRPLPL), serve as a signal peptide directing secretion. Disulfide bonds link cysteine 28-cysteine 89, cysteine 44-cysteine 136, cysteine 46-cysteine 62, cysteine 61-cysteine 117, cysteine 68-cysteine 110, cysteine 78-cysteine 103, and cysteine 96-cysteine 108. Residues tyrosine 45, glycine 47, and glycine 49 each contribute to the Ca(2+) site. Residue histidine 65 is part of the active site. Aspartate 66 lines the Ca(2+) pocket. The active site involves aspartate 111.

The cofactor is Ca(2+). As to expression, expressed by the venom gland.

The protein resides in the secreted. The catalysed reaction is a 1,2-diacyl-sn-glycero-3-phosphocholine + H2O = a 1-acyl-sn-glycero-3-phosphocholine + a fatty acid + H(+). Snake venom phospholipase A2 (PLA2) that may act in the hemostasis system of the prey. Exhibits hydrolytic activities, and prefers the anionic micelles (dPPC with deoxycholate) (54 umol/mg/min) to the zwitterionic micelles (dPPC with Triton X-100) (15 umol/mg/min). PLA2 catalyzes the calcium-dependent hydrolysis of the 2-acyl groups in 3-sn-phosphoglycerides. The protein is Acidic phospholipase A2 PL-II of Walterinnesia aegyptia (Desert black snake).